A 621-amino-acid polypeptide reads, in one-letter code: Type 2 DNA topoisomerase 6 subunit B (621 aa).

ATP-binding positions include Asn-48, Asp-80, 101–102 (SR), 111–118 (GQQGIGIS), and Lys-435.

This sequence belongs to the TOP6B family. In terms of assembly, homodimer. Heterotetramer of two Top6A and two Top6B chains.

It catalyses the reaction ATP-dependent breakage, passage and rejoining of double-stranded DNA.. Its function is as follows. Relaxes both positive and negative superturns and exhibits a strong decatenase activity. The sequence is that of Type 2 DNA topoisomerase 6 subunit B from Methanosarcina barkeri (strain Fusaro / DSM 804).